We begin with the raw amino-acid sequence, 333 residues long: MADKSTEVEKAIDPIIDLGNLLFIDREPIQGDASEGLEERARKNTQLLFNNIWQLEQKRVEEAIIVTLPPATYRLPREKRLPEKKEPTKWEKYAAEKGIEKRKKDKKVFDEATKEWKPTYGYRRGNDDTKDWLIEIPDNAEDPNKDFFAERREKKKERVAKNDMQRMKNLARQMKTTVKSGPSTEKMIGVGVDAKEKSKQQVRFAVDRAKLATASAGKFQEGLKGEKANVKTGKKRKFEANEAPVSGEKERALQILQRMKSKKAKIVEEKAAAVAGPLREKKEKSERKGAKDQTRQKSQIHRQQWFKNKVDGKKKGTGGAGKKGANKAKARKG.

Disordered regions lie at residues 227–248 (KANV…VSGE) and 271–333 (AAAV…ARKG). Basic and acidic residues predominate over residues 278-295 (LREKKEKSERKGAKDQTR). The span at 324-333 (GANKAKARKG) shows a compositional bias: basic residues.

Belongs to the RRS1 family.

It is found in the nucleus. It localises to the nucleolus. Involved in ribosomal large subunit assembly. In Caenorhabditis elegans, this protein is Ribosome biogenesis regulatory protein homolog.